The following is a 170-amino-acid chain: Ribosome maturation factor RimM (170 aa).

In terms of domain architecture, PRC barrel spans 97–170 (HPDEYYWVDL…RIVVDWDPEF (74 aa)).

The protein belongs to the RimM family. In terms of assembly, binds ribosomal protein uS19.

The protein localises to the cytoplasm. An accessory protein needed during the final step in the assembly of 30S ribosomal subunit, possibly for assembly of the head region. Essential for efficient processing of 16S rRNA. May be needed both before and after RbfA during the maturation of 16S rRNA. It has affinity for free ribosomal 30S subunits but not for 70S ribosomes. The chain is Ribosome maturation factor RimM from Xylella fastidiosa (strain M12).